Consider the following 146-residue polypeptide: MSLPAGREATLLAFDYGEKRIGVAVGNSLTRRARPLVIVQNRSREYRFEAVGKLIAEWKPDALVVGLPFHPDGAPHEMTQLAKRFGNQLNGRFNLPVTWVDERYSSVEAKAEIRAGNGRADMLDAEAASIILQQYLDGLSDDHEFH.

It belongs to the YqgF nuclease family.

It localises to the cytoplasm. Functionally, could be a nuclease involved in processing of the 5'-end of pre-16S rRNA. The sequence is that of Putative pre-16S rRNA nuclease from Paraburkholderia phytofirmans (strain DSM 17436 / LMG 22146 / PsJN) (Burkholderia phytofirmans).